Reading from the N-terminus, the 207-residue chain is Inner membrane-spanning protein YciB (207 aa).

The next 6 helical transmembrane spans lie at 3–23 (FLFD…AEGQ), 51–71 (VLLA…WLLL), 78–98 (TMLW…VWFH), 105–125 (WKPS…HAVF), 150–170 (FMWI…AYSF), and 178–198 (FKLF…GLYL).

Belongs to the YciB family.

The protein localises to the cell inner membrane. Its function is as follows. Plays a role in cell envelope biogenesis, maintenance of cell envelope integrity and membrane homeostasis. In Methylibium petroleiphilum (strain ATCC BAA-1232 / LMG 22953 / PM1), this protein is Inner membrane-spanning protein YciB.